The following is a 940-amino-acid chain: UvrABC system protein A (940 aa).

31–38 (GLSGSGKS) provides a ligand contact to ATP. Residues 252 to 279 (CPHCGYSMRELEPRLFSFNNPAGACPTC) form a C4-type zinc finger. ABC transporter domains lie at 309–586 (WDQK…PNSL) and 606–936 (KDAK…RFLK). Residue 639-646 (GVSGSGKS) coordinates ATP. The C4-type zinc-finger motif lies at 739 to 765 (CEACQGDGVIKVEMHFLPDVYVPCDVC).

Belongs to the ABC transporter superfamily. UvrA family. Forms a heterotetramer with UvrB during the search for lesions.

It is found in the cytoplasm. In terms of biological role, the UvrABC repair system catalyzes the recognition and processing of DNA lesions. UvrA is an ATPase and a DNA-binding protein. A damage recognition complex composed of 2 UvrA and 2 UvrB subunits scans DNA for abnormalities. When the presence of a lesion has been verified by UvrB, the UvrA molecules dissociate. This chain is UvrABC system protein A, found in Vibrio cholerae serotype O1 (strain ATCC 39315 / El Tor Inaba N16961).